The following is a 188-amino-acid chain: Large ribosomal subunit protein eL18 (188 aa).

The disordered stretch occupies residues 143–188; it reads RSAREAEKHFGPAPGVPHSHTKPHVRSKGRKFERARGRRASRAYKN. 2 stretches are compositionally biased toward basic residues: residues 161 to 171 and 178 to 188; these read SHTKPHVRSKG and RGRRASRAYKN.

Belongs to the eukaryotic ribosomal protein eL18 family.

It is found in the cytoplasm. The chain is Large ribosomal subunit protein eL18 (rpl-18) from Caenorhabditis briggsae.